The sequence spans 286 residues: MKIKVLKTIAEVRRYIAEERRLGFSIGFVPTMGALHEGHLALVWRARAICDRILVSIFVNPKQFGPHEDFDKYPRDLMADCALLEKAGVEYVFAPSVEEMWPPGNETIVKVEKLSRILIGKLRPGHFCGVTSVVAKLFNIVQPDKAFFGEKDFQQILIVRRMVEDLAFPIEIVGVPILREADGVASSSRNQFLTLEERKAAKIIPESGKAAEKLYRQGERSVDKLCKIVRDILQQESRAIIEKIDLRDMETLSVVKGKLNKPAVLLLTVRFGKVRLIDQYILQEKD.

ATP is bound at residue 32-39 (MGALHEGH). His-39 functions as the Proton donor in the catalytic mechanism. (R)-pantoate is bound at residue Gln-63. Residue Gln-63 participates in beta-alanine binding. 149–152 (GEKD) contributes to the ATP binding site. Residue Gln-155 participates in (R)-pantoate binding. Residues Leu-178 and 186-189 (SSSR) contribute to the ATP site.

It belongs to the pantothenate synthetase family. Homodimer.

It localises to the cytoplasm. It carries out the reaction (R)-pantoate + beta-alanine + ATP = (R)-pantothenate + AMP + diphosphate + H(+). It functions in the pathway cofactor biosynthesis; (R)-pantothenate biosynthesis; (R)-pantothenate from (R)-pantoate and beta-alanine: step 1/1. Catalyzes the condensation of pantoate with beta-alanine in an ATP-dependent reaction via a pantoyl-adenylate intermediate. This Bartonella quintana (strain Toulouse) (Rochalimaea quintana) protein is Pantothenate synthetase.